The chain runs to 387 residues: GTP-binding protein 10 (387 aa).

The Obg domain maps to 13 to 148 (GNFIDNLRLF…RVIHLDLKLI (136 aa)). The region spanning 149–344 (ADIGLVGFPN…LKNCIRKSLD (196 aa)) is the OBG-type G domain. GTP contacts are provided by residues 155-162 (GFPNAGKS), 202-206 (DLPGL), and 278-281 (NKMD).

It belongs to the TRAFAC class OBG-HflX-like GTPase superfamily. OBG GTPase family.

It localises to the nucleus. Its subcellular location is the nucleolus. In terms of biological role, may be involved in the ribosome maturation process. The polypeptide is GTP-binding protein 10 (GTPBP10) (Bos taurus (Bovine)).